The primary structure comprises 810 residues: Volume-regulated anion channel subunit LRRC8A (810 aa).

Residue M1 is modified to N-acetylmethionine. At 1-22 (MIPVTELRYFADTQPAYRILKP) the chain is on the cytoplasmic side. The helical transmembrane segment at 23–47 (WWDVFTDYISIVMLMIAVFGGTLQV) threads the bilayer. Residues 48-123 (TQDKMICLPC…YENRLHWFAK (76 aa)) are Extracellular-facing. Intrachain disulfides connect C54/C310, C57/C65, and C113/C295. Residues N66 and N83 are each glycosylated (N-linked (GlcNAc...) asparagine). Residues 124–142 (YFPYLVLLHTLIFLACSNF) traverse the membrane as a helical segment. Residues 143–264 (WFKFPRTSSK…EEGDIVYRLY (122 aa)) lie on the Cytoplasmic side of the membrane. T200 carries the phosphothreonine modification. At S202 the chain carries Phosphoserine. T215 carries the post-translational modification Phosphothreonine. S217 is subject to Phosphoserine. The helical transmembrane segment at 265–286 (MRQTIIKVIKFALIICYTVYYV) threads the bilayer. The Extracellular portion of the chain corresponds to 287 to 316 (HNIKFDVDCTVDIESLTGYRTYRCAHPLAT). Residues 317-341 (LFKILASFYISLVIFYGLICMYTLW) form a helical membrane-spanning segment. Over 342-810 (WMLRRSLKKY…RLWRADKEQA (469 aa)) the chain is Cytoplasmic. LRR repeat units lie at residues 411 to 422 (WTLDKLRQRLTK), 423 to 445 (NAQD…VFDL), 447 to 468 (ELEV…IAQL), 469 to 492 (TGLK…AFLR), 493 to 515 (ENLR…IYSL), 518 to 542 (LEEL…GLRE), 543 to 565 (LKRL…VTDV), 567 to 589 (VHLQ…SLKK), 590 to 613 (MVNL…IFSL), 614 to 637 (HNLQ…SFQH), 639 to 661 (HRLT…IGNL), 662 to 684 (TNLE…LFYC), 686 to 707 (KLRY…IGLL), 708 to 730 (QNLQ…LFQC), 732 to 753 (KLRA…VGEL), 754 to 776 (TNLT…LGEC), and 778 to 801 (LLKR…VKER). The Di-leucine motif signature appears at 706 to 707 (LL).

Belongs to the LRRC8 family. In terms of assembly, heterohexamer; oligomerizes with other LRRC8 proteins (LRRC8B, LRRC8C, LRRC8D and/or LRRC8E) to form a heterohexamer. Can form homohexamers in vitro, but these have lower conductance than heterohexamers. In vivo, the subunit composition may depend primarily on expression levels, and heterooligomeric channels containing various proportions of the different LRRC8 proteins may coexist. Interact with GRB2. Interacts with NOX4; this interaction prevents the ubiquitin-mediated degradation of LRRC8A. Post-translationally, N-glycosylated. As to expression, ubiquitously expressed. High levels detected in the bone marrow; lower levels found in peripheral blood cells. Highly expressed in pancreatic beta cells.

It localises to the cell membrane. The protein resides in the lysosome membrane. It catalyses the reaction chloride(in) = chloride(out). It carries out the reaction iodide(out) = iodide(in). The enzyme catalyses taurine(out) = taurine(in). The catalysed reaction is L-aspartate(out) = L-aspartate(in). It catalyses the reaction L-glutamate(out) = L-glutamate(in). It carries out the reaction myo-inositol(out) = myo-inositol(in). The enzyme catalyses 2',3'-cGAMP(out) = 2',3'-cGAMP(in). With respect to regulation, inhibited by (4-[(2-butyl-6,7-dichloro-2-cyclopentyl-2,3-dihydro-1-oxo-1H-inden-5-yl)oxy]butanoic acid), which plugs the channel like a cork in a bottle by binding in the extracellular selectivity filter and sterically occluding ion conduction. Lipids may block conduction in closed heterohexameric channels. Its function is as follows. Essential component of the volume-regulated anion channel (VRAC, also named VSOAC channel), an anion channel required to maintain a constant cell volume in response to extracellular or intracellular osmotic changes. The VRAC channel conducts iodide better than chloride and can also conduct organic osmolytes like taurine. Mediates efflux of amino acids, such as aspartate and glutamate, in response to osmotic stress. In complex with LRRC8C or LRRC8E, acts as a transporter of immunoreactive cyclic dinucleotide GMP-AMP (2'-3'-cGAMP), an immune messenger produced in response to DNA virus in the cytosol: mediates both import and export of 2'-3'-cGAMP, thereby promoting transfer of 2'-3'-cGAMP to bystander cells. In contrast, complexes containing LRRC8D inhibit transport of 2'-3'-cGAMP. Required for in vivo channel activity, together with at least one other family member (LRRC8B, LRRC8C, LRRC8D or LRRC8E); channel characteristics depend on the precise subunit composition. Can form functional channels by itself (in vitro). Involved in B-cell development: required for the pro-B cell to pre-B cell transition. Also required for T-cell development. Required for myoblast differentiation: VRAC activity promotes membrane hyperpolarization and regulates insulin-stimulated glucose metabolism and oxygen consumption. Also acts as a regulator of glucose-sensing in pancreatic beta cells: VRAC currents, generated in response to hypotonicity- or glucose-induced beta cell swelling, depolarize cells, thereby causing electrical excitation, leading to increase glucose sensitivity and insulin secretion. Also plays a role in lysosome homeostasis by forming functional lysosomal VRAC channels in response to low cytoplasmic ionic strength condition: lysosomal VRAC channels are necessary for the formation of large lysosome-derived vacuoles, which store and then expel excess water to maintain cytosolic water homeostasis. Acts as a key factor in NLRP3 inflammasome activation by modulating itaconate efflux and mitochondria function. In Mus musculus (Mouse), this protein is Volume-regulated anion channel subunit LRRC8A.